Consider the following 574-residue polypeptide: Putative ABC transporter ATP-binding protein VVA0347 (574 aa).

2 ABC transporter domains span residues Ile3–Glu244 and Leu299–Thr533. ATP-binding positions include Gly37–Ser44 and Gly332–Ser339.

The protein belongs to the ABC transporter superfamily.

It localises to the cell inner membrane. Its function is as follows. Probably part of an ABC transporter complex. Responsible for energy coupling to the transport system. This Vibrio vulnificus (strain YJ016) protein is Putative ABC transporter ATP-binding protein VVA0347.